Consider the following 101-residue polypeptide: Protein Tat (101 aa).

The interval 1–24 (MEPVDPRLEPWKHPGSQPKTACTN) is interaction with human CREBBP. The tract at residues 1–48 (MEPVDPRLEPWKHPGSQPKTACTNCYCKKCCFHCQVCFTKKALGISYG) is transactivation. C22, C25, and C27 together coordinate Zn(2+). The cysteine-rich stretch occupies residues 22–37 (CTNCYCKKCCFHCQVC). K28 is subject to N6-acetyllysine; by host PCAF. 4 residues coordinate Zn(2+): C30, H33, C34, and C37. The tract at residues 38 to 48 (FTKKALGISYG) is core. Residues 47–101 (YGRKKRRQRRRAHQDSQNHQASLSKQPSSQTRGDPTGPKEPKKEVEREAETDPLD) are disordered. Positions 48-58 (GRKKRRQRRRA) are enriched in basic residues. The Nuclear localization signal, RNA-binding (TAR), and protein transduction signature appears at 49–57 (RKKRRQRRR). Residues 49–86 (RKKRRQRRRAHQDSQNHQASLSKQPSSQTRGDPTGPKE) are interaction with the host capping enzyme RNGTT. Residues K50 and K51 each carry the N6-acetyllysine; by host EP300 and GCN5L2 modification. 2 positions are modified to asymmetric dimethylarginine; by host PRMT6: R52 and R53. A compositionally biased stretch (polar residues) spans 61–79 (DSQNHQASLSKQPSSQTRG). K71 participates in a covalent cross-link: Glycyl lysine isopeptide (Lys-Gly) (interchain with G-Cter in ubiquitin). A Cell attachment site motif is present at residues 78–80 (RGD). The segment covering 83–101 (GPKEPKKEVEREAETDPLD) has biased composition (basic and acidic residues).

The protein belongs to the lentiviruses Tat family. As to quaternary structure, interacts with host CCNT1. Associates with the P-TEFb complex composed at least of Tat, P-TEFb (CDK9 and CCNT1), TAR RNA, RNA Pol II. Recruits the HATs CREBBP, TAF1/TFIID, EP300, PCAF and GCN5L2. Interacts with host KAT5/Tip60; this interaction targets the latter to degradation. Interacts with the host deacetylase SIRT1. Interacts with host capping enzyme RNGTT; this interaction stimulates RNGTT. Binds to host KDR, and to the host integrins ITGAV/ITGB3 and ITGA5/ITGB1. Interacts with host KPNB1/importin beta-1 without previous binding to KPNA1/importin alpha-1. Interacts with EIF2AK2. Interacts with host nucleosome assembly protein NAP1L1; this interaction may be required for the transport of Tat within the nucleus, since the two proteins interact at the nuclear rim. Interacts with host C1QBP/SF2P32; this interaction involves lysine-acetylated Tat. Interacts with the host chemokine receptors CCR2, CCR3 and CXCR4. Interacts with host DPP4/CD26; this interaction may trigger an anti-proliferative effect. Interacts with host LDLR. Interacts with the host extracellular matrix metalloproteinase MMP1. Interacts with host PRMT6; this interaction mediates Tat's methylation. Interacts with, and is ubiquitinated by MDM2/Hdm2. Interacts with host PSMC3 and HTATIP2. Interacts with STAB1; this interaction may overcome SATB1-mediated repression of IL2 and IL2RA (interleukin) in T cells by binding to the same domain than HDAC1. Interacts (when acetylated) with human CDK13, thereby increasing HIV-1 mRNA splicing and promoting the production of the doubly spliced HIV-1 protein Nef. Interacts with host TBP; this interaction modulates the activity of transcriptional pre-initiation complex. Interacts with host RELA. Interacts with host PLSCR1; this interaction negatively regulates Tat transactivation activity by altering its subcellular distribution. Post-translationally, asymmetrical arginine methylation by host PRMT6 seems to diminish the transactivation capacity of Tat and affects the interaction with host CCNT1. Acetylation by EP300, CREBBP, GCN5L2/GCN5 and PCAF regulates the transactivation activity of Tat. EP300-mediated acetylation of Lys-50 promotes dissociation of Tat from the TAR RNA through the competitive binding to PCAF's bromodomain. In addition, the non-acetylated Tat's N-terminus can also interact with PCAF. PCAF-mediated acetylation of Lys-28 enhances Tat's binding to CCNT1. Lys-50 is deacetylated by SIRT1. In terms of processing, polyubiquitination by host MDM2 does not target Tat to degradation, but activates its transactivation function and fosters interaction with CCNT1 and TAR RNA. Post-translationally, phosphorylated by EIF2AK2 on serine and threonine residues adjacent to the basic region important for TAR RNA binding and function. Phosphorylation of Tat by EIF2AK2 is dependent on the prior activation of EIF2AK2 by dsRNA.

The protein localises to the host nucleus. The protein resides in the host nucleolus. It localises to the host cytoplasm. Its subcellular location is the secreted. Transcriptional activator that increases RNA Pol II processivity, thereby increasing the level of full-length viral transcripts. Recognizes a hairpin structure at the 5'-LTR of the nascent viral mRNAs referred to as the transactivation responsive RNA element (TAR) and recruits the cyclin T1-CDK9 complex (P-TEFb complex) that will in turn hyperphosphorylate the RNA polymerase II to allow efficient elongation. The CDK9 component of P-TEFb and other Tat-activated kinases hyperphosphorylate the C-terminus of RNA Pol II that becomes stabilized and much more processive. Other factors such as HTATSF1/Tat-SF1, SUPT5H/SPT5, and HTATIP2 are also important for Tat's function. Besides its effect on RNA Pol II processivity, Tat induces chromatin remodeling of proviral genes by recruiting the histone acetyltransferases (HATs) CREBBP, EP300 and PCAF to the chromatin. This also contributes to the increase in proviral transcription rate, especially when the provirus integrates in transcriptionally silent region of the host genome. To ensure maximal activation of the LTR, Tat mediates nuclear translocation of NF-kappa-B by interacting with host RELA. Through its interaction with host TBP, Tat may also modulate transcription initiation. Tat can reactivate a latently infected cell by penetrating in it and transactivating its LTR promoter. In the cytoplasm, Tat is thought to act as a translational activator of HIV-1 mRNAs. In terms of biological role, extracellular circulating Tat can be endocytosed by surrounding uninfected cells via the binding to several surface receptors such as CD26, CXCR4, heparan sulfate proteoglycans (HSPG) or LDLR. Neurons are rarely infected, but they internalize Tat via their LDLR. Through its interaction with nuclear HATs, Tat is potentially able to control the acetylation-dependent cellular gene expression. Modulates the expression of many cellular genes involved in cell survival, proliferation or in coding for cytokines or cytokine receptors. Tat plays a role in T-cell and neurons apoptosis. Tat induced neurotoxicity and apoptosis probably contribute to neuroAIDS. Circulating Tat also acts as a chemokine-like and/or growth factor-like molecule that binds to specific receptors on the surface of the cells, affecting many cellular pathways. In the vascular system, Tat binds to ITGAV/ITGB3 and ITGA5/ITGB1 integrins dimers at the surface of endothelial cells and competes with bFGF for heparin-binding sites, leading to an excess of soluble bFGF. This is Protein Tat from Homo sapiens (Human).